Consider the following 328-residue polypeptide: Small neutral protease regulatory protein (328 aa).

In terms of domain architecture, HTH lysR-type spans 1–60 (MELEVRHLRALCAIADAGSLHRAARRLGVAQPTLSTQLTRIEQALGGPLFTRERTGCRPT). Positions 20–39 (LHRAARRLGVAQPTLSTQLT) form a DNA-binding region, H-T-H motif.

The protein belongs to the LysR transcriptional regulatory family.

In terms of biological role, transcriptional trans-activator of the gene (mprA) for the small neutral protease. The sequence is that of Small neutral protease regulatory protein (mprR) from Streptomyces coelicolor (strain ATCC BAA-471 / A3(2) / M145).